A 261-amino-acid polypeptide reads, in one-letter code: Thiazole synthase (261 aa).

The Schiff-base intermediate with DXP role is filled by Lys-102. 1-deoxy-D-xylulose 5-phosphate-binding positions include Gly-163, 189–190 (AG), and 211–212 (NT).

This sequence belongs to the ThiG family. Homotetramer. Forms heterodimers with either ThiH or ThiS.

The protein localises to the cytoplasm. The catalysed reaction is [ThiS sulfur-carrier protein]-C-terminal-Gly-aminoethanethioate + 2-iminoacetate + 1-deoxy-D-xylulose 5-phosphate = [ThiS sulfur-carrier protein]-C-terminal Gly-Gly + 2-[(2R,5Z)-2-carboxy-4-methylthiazol-5(2H)-ylidene]ethyl phosphate + 2 H2O + H(+). Its pathway is cofactor biosynthesis; thiamine diphosphate biosynthesis. Functionally, catalyzes the rearrangement of 1-deoxy-D-xylulose 5-phosphate (DXP) to produce the thiazole phosphate moiety of thiamine. Sulfur is provided by the thiocarboxylate moiety of the carrier protein ThiS. In vitro, sulfur can be provided by H(2)S. The chain is Thiazole synthase from Myxococcus xanthus (strain DK1622).